We begin with the raw amino-acid sequence, 475 residues long: Ribulose bisphosphate carboxylase large chain (475 aa).

Substrate is bound by residues N123 and T173. K175 functions as the Proton acceptor in the catalytic mechanism. K177 serves as a coordination point for substrate. Residues K201, D203, and E204 each contribute to the Mg(2+) site. N6-carboxylysine is present on K201. H294 (proton acceptor) is an active-site residue. Positions 295, 327, and 379 each coordinate substrate.

The protein belongs to the RuBisCO large chain family. Type I subfamily. As to quaternary structure, heterohexadecamer of 8 large chains and 8 small chains; disulfide-linked. The disulfide link is formed within the large subunit homodimers. The cofactor is Mg(2+). In terms of processing, the disulfide bond which can form in the large chain dimeric partners within the hexadecamer appears to be associated with oxidative stress and protein turnover.

It is found in the plastid. Its subcellular location is the chloroplast. The catalysed reaction is 2 (2R)-3-phosphoglycerate + 2 H(+) = D-ribulose 1,5-bisphosphate + CO2 + H2O. It catalyses the reaction D-ribulose 1,5-bisphosphate + O2 = 2-phosphoglycolate + (2R)-3-phosphoglycerate + 2 H(+). RuBisCO catalyzes two reactions: the carboxylation of D-ribulose 1,5-bisphosphate, the primary event in carbon dioxide fixation, as well as the oxidative fragmentation of the pentose substrate in the photorespiration process. Both reactions occur simultaneously and in competition at the same active site. This Euglena gracilis protein is Ribulose bisphosphate carboxylase large chain.